The primary structure comprises 60 residues: Large ribosomal subunit protein bL33 (60 aa).

Belongs to the bacterial ribosomal protein bL33 family.

The sequence is that of Large ribosomal subunit protein bL33 from Chlorobaculum tepidum (strain ATCC 49652 / DSM 12025 / NBRC 103806 / TLS) (Chlorobium tepidum).